The chain runs to 459 residues: Methylenetetrahydrofolate--tRNA-(uracil-5-)-methyltransferase TrmFO (459 aa).

11 to 16 (GAGLAG) lines the FAD pocket.

Belongs to the MnmG family. TrmFO subfamily. FAD serves as cofactor.

The protein localises to the cytoplasm. The catalysed reaction is uridine(54) in tRNA + (6R)-5,10-methylene-5,6,7,8-tetrahydrofolate + NADH + H(+) = 5-methyluridine(54) in tRNA + (6S)-5,6,7,8-tetrahydrofolate + NAD(+). It catalyses the reaction uridine(54) in tRNA + (6R)-5,10-methylene-5,6,7,8-tetrahydrofolate + NADPH + H(+) = 5-methyluridine(54) in tRNA + (6S)-5,6,7,8-tetrahydrofolate + NADP(+). In terms of biological role, catalyzes the folate-dependent formation of 5-methyl-uridine at position 54 (M-5-U54) in all tRNAs. The protein is Methylenetetrahydrofolate--tRNA-(uracil-5-)-methyltransferase TrmFO of Synechococcus sp. (strain CC9311).